The primary structure comprises 91 residues: UPF0335 protein BBta_6866 (91 aa).

It belongs to the UPF0335 family.

This Bradyrhizobium sp. (strain BTAi1 / ATCC BAA-1182) protein is UPF0335 protein BBta_6866.